Consider the following 515-residue polypeptide: Bifunctional purine biosynthesis protein PurH (515 aa).

In terms of domain architecture, MGS-like spans 1–145 (MTKRALISVS…KNHASVTVVV (145 aa)).

This sequence belongs to the PurH family.

The catalysed reaction is (6R)-10-formyltetrahydrofolate + 5-amino-1-(5-phospho-beta-D-ribosyl)imidazole-4-carboxamide = 5-formamido-1-(5-phospho-D-ribosyl)imidazole-4-carboxamide + (6S)-5,6,7,8-tetrahydrofolate. It catalyses the reaction IMP + H2O = 5-formamido-1-(5-phospho-D-ribosyl)imidazole-4-carboxamide. It functions in the pathway purine metabolism; IMP biosynthesis via de novo pathway; 5-formamido-1-(5-phospho-D-ribosyl)imidazole-4-carboxamide from 5-amino-1-(5-phospho-D-ribosyl)imidazole-4-carboxamide (10-formyl THF route): step 1/1. Its pathway is purine metabolism; IMP biosynthesis via de novo pathway; IMP from 5-formamido-1-(5-phospho-D-ribosyl)imidazole-4-carboxamide: step 1/1. This is Bifunctional purine biosynthesis protein PurH from Streptococcus uberis (strain ATCC BAA-854 / 0140J).